Consider the following 104-residue polypeptide: MAAKIRREDEVIVLAGKDKGKRAKVSQVLPTGKLIVEGINLVKKHQKPNPQLGVAGGIVEKEAPIQASNVAIFNSATGKADRVGFRFEDGKKVRFFKSNSELVK.

Belongs to the universal ribosomal protein uL24 family. As to quaternary structure, part of the 50S ribosomal subunit.

In terms of biological role, one of two assembly initiator proteins, it binds directly to the 5'-end of the 23S rRNA, where it nucleates assembly of the 50S subunit. Its function is as follows. One of the proteins that surrounds the polypeptide exit tunnel on the outside of the subunit. The polypeptide is Large ribosomal subunit protein uL24 (Shewanella baltica (strain OS223)).